The sequence spans 102 residues: Small ribosomal subunit protein uS10 (102 aa).

This sequence belongs to the universal ribosomal protein uS10 family. Part of the 30S ribosomal subunit.

In terms of biological role, involved in the binding of tRNA to the ribosomes. This is Small ribosomal subunit protein uS10 from Shouchella clausii (strain KSM-K16) (Alkalihalobacillus clausii).